The sequence spans 386 residues: Ovalbumin (386 aa).

An N-acetylglycine modification is found at glycine 2. A signal peptide (not cleaved) is located at residues 22–48 (HHANENIFYCPIAIMSALAMVYLGAKD). Serine 69 carries the post-translational modification Phosphoserine. Residues cysteine 74 and cysteine 121 are joined by a disulfide bond. Glutamate 192 serves as a coordination point for Ca(2+). Residue asparagine 293 is glycosylated (N-linked (GlcNAc...) asparagine). Serine 345 is modified (phosphoserine).

This sequence belongs to the serpin family. Ov-serpin subfamily. As to quaternary structure, homodimer. In terms of processing, undergoes proteolytic cleavage first at the canonical P1-P1' site, and then at the P8-P7 site by subtilisin. Major protein of egg white. Expressed in the magnum of the oviduct (at protein level).

The protein localises to the secreted. Non-inhibitory serpin. Storage protein of egg white. This Gallus gallus (Chicken) protein is Ovalbumin (SERPINB14).